Consider the following 232-residue polypeptide: Acyl-protein thioesterase 1 (232 aa).

Active-site charge relay system residues include S125, D179, and H212.

It belongs to the AB hydrolase superfamily. AB hydrolase 2 family.

It is found in the cytoplasm. The protein localises to the nucleus. It catalyses the reaction S-hexadecanoyl-L-cysteinyl-[protein] + H2O = L-cysteinyl-[protein] + hexadecanoate + H(+). In terms of biological role, hydrolyzes fatty acids from S-acylated cysteine residues in proteins with a strong preference for palmitoylated G-alpha proteins over other acyl substrates. Mediates the deacylation of G-alpha proteins such as GPA1 in vivo, but has weak or no activity toward palmitoylated Ras proteins. Has weak lysophospholipase activity in vitro; however such activity may not exist in vivo. This is Acyl-protein thioesterase 1 from Debaryomyces hansenii (strain ATCC 36239 / CBS 767 / BCRC 21394 / JCM 1990 / NBRC 0083 / IGC 2968) (Yeast).